The chain runs to 279 residues: DegV domain-containing protein M6_Spy1246 (279 aa).

The 275-residue stretch at 4 to 278 (IKIVTDSSIT…EGAFAVMVRY (275 aa)) folds into the DegV domain. Hexadecanoate is bound by residues Thr-62 and Ser-95.

May bind long-chain fatty acids, such as palmitate, and may play a role in lipid transport or fatty acid metabolism. The chain is DegV domain-containing protein M6_Spy1246 from Streptococcus pyogenes serotype M6 (strain ATCC BAA-946 / MGAS10394).